The primary structure comprises 127 residues: Small ribosomal subunit protein uS12 (127 aa).

Asp89 is subject to 3-methylthioaspartic acid. Residues 101–127 form a disordered region; that stretch reads ALDTSGVAGRTQRRSKYGAKRPKEAKK. Positions 111–127 are enriched in basic residues; that stretch reads TQRRSKYGAKRPKEAKK.

The protein belongs to the universal ribosomal protein uS12 family. Part of the 30S ribosomal subunit. Contacts proteins S8 and S17. May interact with IF1 in the 30S initiation complex.

In terms of biological role, with S4 and S5 plays an important role in translational accuracy. Functionally, interacts with and stabilizes bases of the 16S rRNA that are involved in tRNA selection in the A site and with the mRNA backbone. Located at the interface of the 30S and 50S subunits, it traverses the body of the 30S subunit contacting proteins on the other side and probably holding the rRNA structure together. The combined cluster of proteins S8, S12 and S17 appears to hold together the shoulder and platform of the 30S subunit. This Flavobacterium psychrophilum (strain ATCC 49511 / DSM 21280 / CIP 103535 / JIP02/86) protein is Small ribosomal subunit protein uS12.